An 801-amino-acid polypeptide reads, in one-letter code: LPS-assembly protein LptD (801 aa).

Positions 1–23 (MARLFSLKPLVLALGFCFGTHCA) are cleaved as a signal peptide.

The protein belongs to the LptD family. In terms of assembly, component of the lipopolysaccharide transport and assembly complex. Interacts with LptE and LptA.

It localises to the cell outer membrane. Its function is as follows. Together with LptE, is involved in the assembly of lipopolysaccharide (LPS) at the surface of the outer membrane. The sequence is that of LPS-assembly protein LptD from Neisseria gonorrhoeae (strain ATCC 700825 / FA 1090).